Reading from the N-terminus, the 140-residue chain is Translation initiation factor 2 subunit beta (140 aa).

This sequence belongs to the eIF-2-beta/eIF-5 family. As to quaternary structure, heterotrimer composed of an alpha, a beta and a gamma chain.

In terms of biological role, eIF-2 functions in the early steps of protein synthesis by forming a ternary complex with GTP and initiator tRNA. The sequence is that of Translation initiation factor 2 subunit beta (eif2b) from Pyrococcus horikoshii (strain ATCC 700860 / DSM 12428 / JCM 9974 / NBRC 100139 / OT-3).